We begin with the raw amino-acid sequence, 642 residues long: Threonine--tRNA ligase (642 aa).

Positions 1 to 61 constitute a TGS domain; that stretch reads MPIITLPDGS…EADASLAIIT (61 aa). Residues 243–534 are catalytic; the sequence is DHRKIGKQLD…LTEEYAGLFP (292 aa). Positions 334, 385, and 511 each coordinate Zn(2+).

Belongs to the class-II aminoacyl-tRNA synthetase family. As to quaternary structure, homodimer. It depends on Zn(2+) as a cofactor.

It localises to the cytoplasm. The enzyme catalyses tRNA(Thr) + L-threonine + ATP = L-threonyl-tRNA(Thr) + AMP + diphosphate + H(+). Its function is as follows. Catalyzes the attachment of threonine to tRNA(Thr) in a two-step reaction: L-threonine is first activated by ATP to form Thr-AMP and then transferred to the acceptor end of tRNA(Thr). Also edits incorrectly charged L-seryl-tRNA(Thr). The chain is Threonine--tRNA ligase from Aeromonas hydrophila subsp. hydrophila (strain ATCC 7966 / DSM 30187 / BCRC 13018 / CCUG 14551 / JCM 1027 / KCTC 2358 / NCIMB 9240 / NCTC 8049).